A 269-amino-acid chain; its full sequence is uncharacterized protein (269 aa).

Basic residues predominate over residues 1–12 (MSKRTNNKKRKH). A disordered region spans residues 1 to 82 (MSKRTNNKKR…KKKENGNENV (82 aa)). A compositionally biased stretch (acidic residues) spans 21 to 33 (PENQDENQDEEFL). The segment covering 34 to 63 (EDKNKDKNQNKNKDKNKNKDMNKNKNKDMN) has biased composition (basic and acidic residues).

This is an uncharacterized protein from Dictyostelium discoideum (Social amoeba).